The sequence spans 431 residues: Adenylosuccinate synthetase (431 aa).

GTP contacts are provided by residues 12-18 (GDEGKGK) and 40-42 (GHT). Aspartate 13 serves as the catalytic Proton acceptor. Mg(2+) is bound by residues aspartate 13 and glycine 40. Residues 13-16 (DEGK), 38-41 (NAGH), threonine 128, arginine 142, glutamine 225, threonine 240, and arginine 304 contribute to the IMP site. Histidine 41 acts as the Proton donor in catalysis. 300-306 (TTTGRPR) contributes to the substrate binding site. GTP is bound by residues arginine 306, 332–334 (KLD), and 414–416 (GVG).

Belongs to the adenylosuccinate synthetase family. Homodimer. The cofactor is Mg(2+).

It localises to the cytoplasm. The catalysed reaction is IMP + L-aspartate + GTP = N(6)-(1,2-dicarboxyethyl)-AMP + GDP + phosphate + 2 H(+). It participates in purine metabolism; AMP biosynthesis via de novo pathway; AMP from IMP: step 1/2. Plays an important role in the de novo pathway of purine nucleotide biosynthesis. Catalyzes the first committed step in the biosynthesis of AMP from IMP. This Thermomicrobium roseum (strain ATCC 27502 / DSM 5159 / P-2) protein is Adenylosuccinate synthetase.